Here is a 2147-residue protein sequence, read N- to C-terminus: Probable serine/threonine-protein kinase roco6 (2147 aa).

The Extracellular segment spans residues 1-1055 (MNSIHKQHYT…LDHSRVEFNR (1055 aa)). LRR repeat units follow at residues 69-89 (DMKY…MMIP), 101-122 (SISI…LKQL), 124-145 (QLIS…FPEE), 148-169 (LLRK…FNKF), 171-192 (ILED…LFPE), 193-214 (GIMR…PWFE), 215-236 (SLLT…PFHL), 237-256 (VRVS…VILR), 306-328 (HLTH…ANLT), 329-350 (ELVR…IVSY), and 352-372 (RLEH…PRRI). The 361-residue stretch at 390–750 (QGEPSYRVKL…DLLKKTVVEL (361 aa)) folds into the Roc domain. The tract at residues 390-750 (QGEPSYRVKL…DLLKKTVVEL (361 aa)) is small GTPase-like. 403-410 (GQENVGKT) is a GTP binding site. Disordered stretches follow at residues 491 to 582 (NSNG…VGTN) and 602 to 621 (SNLS…GGSG). 4 stretches are compositionally biased toward low complexity: residues 492 to 512 (SNGV…NIHS), 519 to 531 (NVNS…SNNS), 539 to 568 (NSFL…NVNS), and 602 to 617 (SNLS…NNNS). Residues 634–638 (DCAGQ) and 691–694 (THLD) contribute to the GTP site. Positions 758 to 892 (PELYLKLEKL…RFELMFPLDS (135 aa)) constitute a COR domain. Composition is skewed to low complexity over residues 905 to 941 (GNSY…SPST) and 960 to 977 (SGNN…RSIS). The tract at residues 905 to 995 (GNSYVNNNNN…NSDLDLIGGG (91 aa)) is disordered. The stretch at 1051 to 1098 (VEFNRWIQLSFAPAGLFSRLLIRLLISKEFDMKPILYWRNGVVVESQS) is one WD 1 repeat. A helical membrane pass occupies residues 1056–1076 (WIQLSFAPAGLFSRLLIRLLI). The Cytoplasmic segment spans residues 1077 to 2147 (SKEFDMKPIL…CGTNNVCIWS (1071 aa)). 3 LRR repeats span residues 1237-1263 (ILSI…PPPP), 1274-1297 (DDNI…GSQP), and 1325-1348 (ESSL…TYKY). The 272-residue stretch at 1356 to 1627 (FESPKLIGRG…KIVKRIKQII (272 aa)) folds into the Protein kinase domain. ATP is bound by residues 1362-1370 (IGRGASGKI) and K1383. D1481 serves as the catalytic Proton acceptor. The interval 1653–1699 (ADSQPFHYHQQQQPSLNSTNQLQQQQYSSVLTSPRSNLSDSSNSSQN) is disordered. A compositionally biased stretch (low complexity) spans 1662 to 1699 (QQQQPSLNSTNQLQQQQYSSVLTSPRSNLSDSSNSSQN). 2 WD repeats span residues 1735–1774 (QPEA…QIFR) and 1778–1820 (LHPG…LDDQ). In terms of domain architecture, PH spans 1821 to 1923 (SGTKSDFITK…WLTAINRVIN (103 aa)). The WD 4 repeat unit spans residues 2031 to 2068 (HYSKPITSMALVEKNVWISCEDESLSVWDGDTGSFIRK).

This sequence belongs to the protein kinase superfamily. TKL Ser/Thr protein kinase family. ROCO subfamily.

Its subcellular location is the membrane. It catalyses the reaction L-seryl-[protein] + ATP = O-phospho-L-seryl-[protein] + ADP + H(+). The enzyme catalyses L-threonyl-[protein] + ATP = O-phospho-L-threonyl-[protein] + ADP + H(+). In terms of biological role, may act as a serine/threonine-protein kinase and guanine-nucleotide releasing factor. This chain is Probable serine/threonine-protein kinase roco6 (roco6), found in Dictyostelium discoideum (Social amoeba).